A 288-amino-acid chain; its full sequence is Coenzyme gamma-F420-2:alpha-L-glutamate ligase (288 aa).

The region spanning 101–287 (IKLLAKNKIK…IAEALVRYAK (187 aa)) is the ATP-grasp domain. ATP-binding positions include Lys-139, 173–186 (QEFI…LYRD), and Arg-202. Mn(2+) is bound by residues Asp-245, Glu-257, and Asn-259.

The protein belongs to the RimK family. CofF subfamily. As to quaternary structure, monomer. Requires Mn(2+) as cofactor.

The catalysed reaction is oxidized coenzyme F420-2 + L-glutamate + ATP = oxidized coenzyme alpha-F420-3 + ADP + phosphate + H(+). The protein operates within cofactor biosynthesis; coenzyme F420 biosynthesis. With respect to regulation, inhibited by KCl. Its function is as follows. Catalyzes the ATP-dependent addition of one alpha-linked L-glutamate molecule to coenzyme gamma-F420-2, producing alpha-F420-3, the major form of coenzyme F420 found in M.jannaschii. Thus, caps the gamma-polyglutamate tail of coenzyme F420 with a terminal alpha-linked glutamate. Prefers ATP to other purine nucleotide triphosphates; GTP gives about 25% of the activity observed with ATP. Cannot catalyze the addition of the following amino acids or analogs: D-glutamate, beta-glutamate, L-aspartate, L-glutamine, L-alpha-aminoadipate, or D,L-2-amino-4-phosphono-butyrate. The sequence is that of Coenzyme gamma-F420-2:alpha-L-glutamate ligase (cofF) from Methanocaldococcus jannaschii (strain ATCC 43067 / DSM 2661 / JAL-1 / JCM 10045 / NBRC 100440) (Methanococcus jannaschii).